Consider the following 218-residue polypeptide: Cytochrome b6 (218 aa).

Residues 35 to 55 form a helical membrane-spanning segment; sequence IFYCLGGITLVCFLIQFATGF. Cys-38 contacts heme c. Residues His-89 and His-103 each coordinate heme b. A run of 3 helical transmembrane segments spans residues 93-113, 119-139, and 189-209; these read ASMM…TGGF, LTWV…VTGY, and LHTF…FLMI. Residues His-190 and His-205 each contribute to the heme b site.

It belongs to the cytochrome b family. PetB subfamily. As to quaternary structure, the 4 large subunits of the cytochrome b6-f complex are cytochrome b6, subunit IV (17 kDa polypeptide, PetD), cytochrome f and the Rieske protein, while the 4 small subunits are PetG, PetL, PetM and PetN. The complex functions as a dimer. Heme b serves as cofactor. Heme c is required as a cofactor.

Its subcellular location is the cellular thylakoid membrane. Its function is as follows. Component of the cytochrome b6-f complex, which mediates electron transfer between photosystem II (PSII) and photosystem I (PSI), cyclic electron flow around PSI, and state transitions. The chain is Cytochrome b6 from Synechococcus sp. (strain CC9311).